The primary structure comprises 162 residues: Fibroblast growth factor 22 (162 aa).

A signal peptide spans 1–22 (MRSRLWLGLAWLLLARAPGAPG).

It belongs to the heparin-binding growth factors family. Interacts with FGFR1 and FGFR2. Interacts with FGFBP1. Preferentially expressed in skin; low expression in brain. Expressed in the inner root sheath of the hair follicle.

The protein localises to the secreted. Its function is as follows. Plays a role in the fasting response, glucose homeostasis, lipolysis and lipogenesis. Can stimulate cell proliferation (in vitro). May be involved in hair development. The polypeptide is Fibroblast growth factor 22 (Fgf22) (Mus musculus (Mouse)).